Here is a 340-residue protein sequence, read N- to C-terminus: Glyceraldehyde-3-phosphate dehydrogenase (340 aa).

Residues 13–14 (TI) and Gly112 contribute to the NAD(+) site. 141–143 (SCN) lines the D-glyceraldehyde 3-phosphate pocket. Catalysis depends on Cys142, which acts as the Nucleophile. Position 170 (Arg170) interacts with NAD(+). 196–197 (HG) contributes to the D-glyceraldehyde 3-phosphate binding site. Gln302 contributes to the NAD(+) binding site.

This sequence belongs to the glyceraldehyde-3-phosphate dehydrogenase family. As to quaternary structure, homotetramer.

It localises to the cytoplasm. It catalyses the reaction D-glyceraldehyde 3-phosphate + phosphate + NADP(+) = (2R)-3-phospho-glyceroyl phosphate + NADPH + H(+). It carries out the reaction D-glyceraldehyde 3-phosphate + phosphate + NAD(+) = (2R)-3-phospho-glyceroyl phosphate + NADH + H(+). It functions in the pathway carbohydrate degradation; glycolysis; pyruvate from D-glyceraldehyde 3-phosphate: step 1/5. This is Glyceraldehyde-3-phosphate dehydrogenase (gap) from Archaeoglobus fulgidus (strain ATCC 49558 / DSM 4304 / JCM 9628 / NBRC 100126 / VC-16).